Consider the following 313-residue polypeptide: Methionyl-tRNA formyltransferase (313 aa).

113–116 is a binding site for (6S)-5,6,7,8-tetrahydrofolate; it reads SLLP.

This sequence belongs to the Fmt family.

It catalyses the reaction L-methionyl-tRNA(fMet) + (6R)-10-formyltetrahydrofolate = N-formyl-L-methionyl-tRNA(fMet) + (6S)-5,6,7,8-tetrahydrofolate + H(+). Attaches a formyl group to the free amino group of methionyl-tRNA(fMet). The formyl group appears to play a dual role in the initiator identity of N-formylmethionyl-tRNA by promoting its recognition by IF2 and preventing the misappropriation of this tRNA by the elongation apparatus. In Acidithiobacillus ferrooxidans (strain ATCC 23270 / DSM 14882 / CIP 104768 / NCIMB 8455) (Ferrobacillus ferrooxidans (strain ATCC 23270)), this protein is Methionyl-tRNA formyltransferase.